The sequence spans 142 residues: Small ribosomal subunit protein bS18m (142 aa).

It belongs to the bacterial ribosomal protein bS18 family. Component of the mitochondrial small ribosomal subunit (mt-SSU). Mature mammalian 55S mitochondrial ribosomes consist of a small (28S) and a large (39S) subunit. The 28S small subunit contains a 12S ribosomal RNA (12S mt-rRNA) and 30 different proteins. The 39S large subunit contains a 16S rRNA (16S mt-rRNA), a copy of mitochondrial valine transfer RNA (mt-tRNA(Val)), which plays an integral structural role, and 52 different proteins. bS18m has a zinc binding site.

It localises to the mitochondrion. The polypeptide is Small ribosomal subunit protein bS18m (MRPS18C) (Homo sapiens (Human)).